We begin with the raw amino-acid sequence, 179 residues long: Large ribosomal subunit protein uL5 (179 aa).

It belongs to the universal ribosomal protein uL5 family. In terms of assembly, part of the 50S ribosomal subunit; part of the 5S rRNA/L5/L18/L25 subcomplex. Contacts the 5S rRNA and the P site tRNA. Forms a bridge to the 30S subunit in the 70S ribosome.

Its function is as follows. This is one of the proteins that bind and probably mediate the attachment of the 5S RNA into the large ribosomal subunit, where it forms part of the central protuberance. In the 70S ribosome it contacts protein S13 of the 30S subunit (bridge B1b), connecting the 2 subunits; this bridge is implicated in subunit movement. Contacts the P site tRNA; the 5S rRNA and some of its associated proteins might help stabilize positioning of ribosome-bound tRNAs. This Shewanella oneidensis (strain ATCC 700550 / JCM 31522 / CIP 106686 / LMG 19005 / NCIMB 14063 / MR-1) protein is Large ribosomal subunit protein uL5.